A 558-amino-acid chain; its full sequence is Formate--tetrahydrofolate ligase (558 aa).

67–74 (TPAGEGKT) provides a ligand contact to ATP.

The protein belongs to the formate--tetrahydrofolate ligase family.

It catalyses the reaction (6S)-5,6,7,8-tetrahydrofolate + formate + ATP = (6R)-10-formyltetrahydrofolate + ADP + phosphate. It functions in the pathway one-carbon metabolism; tetrahydrofolate interconversion. The sequence is that of Formate--tetrahydrofolate ligase from Ruegeria sp. (strain TM1040) (Silicibacter sp.).